The sequence spans 319 residues: Beta-ketoacyl-[acyl-carrier-protein] synthase III (319 aa).

Residues Cys114 and His246 contribute to the active site. Residues 247-251 are ACP-binding; the sequence is QANIR. The active site involves Asn276.

This sequence belongs to the thiolase-like superfamily. FabH family. Homodimer.

It is found in the cytoplasm. The enzyme catalyses malonyl-[ACP] + acetyl-CoA + H(+) = 3-oxobutanoyl-[ACP] + CO2 + CoA. It participates in lipid metabolism; fatty acid biosynthesis. In terms of biological role, catalyzes the condensation reaction of fatty acid synthesis by the addition to an acyl acceptor of two carbons from malonyl-ACP. Catalyzes the first condensation reaction which initiates fatty acid synthesis and may therefore play a role in governing the total rate of fatty acid production. Possesses both acetoacetyl-ACP synthase and acetyl transacylase activities. Its substrate specificity determines the biosynthesis of branched-chain and/or straight-chain of fatty acids. In Thiobacillus denitrificans (strain ATCC 25259 / T1), this protein is Beta-ketoacyl-[acyl-carrier-protein] synthase III.